The sequence spans 128 residues: MLEAGIDIIEISRLERSIKRHPRLLARVFTPAEVAYCLARHRPGASLAARFAAKEAVMKALGIGLGRCSWQDIEITREQGGRPRVILHNRARQLARELGVGEITVSLSHCHAYAAAVALVESSFSEEG.

Asp7 and Glu55 together coordinate Mg(2+).

It belongs to the P-Pant transferase superfamily. AcpS family. It depends on Mg(2+) as a cofactor.

Its subcellular location is the cytoplasm. It catalyses the reaction apo-[ACP] + CoA = holo-[ACP] + adenosine 3',5'-bisphosphate + H(+). Its function is as follows. Transfers the 4'-phosphopantetheine moiety from coenzyme A to a Ser of acyl-carrier-protein. This chain is Holo-[acyl-carrier-protein] synthase, found in Moorella thermoacetica (strain ATCC 39073 / JCM 9320).